A 234-amino-acid chain; its full sequence is Ubiquinone biosynthesis O-methyltransferase (234 aa).

S-adenosyl-L-methionine contacts are provided by Arg-39, Gly-59, Asp-80, and Met-124.

The protein belongs to the methyltransferase superfamily. UbiG/COQ3 family.

The enzyme catalyses a 3-demethylubiquinol + S-adenosyl-L-methionine = a ubiquinol + S-adenosyl-L-homocysteine + H(+). It carries out the reaction a 3-(all-trans-polyprenyl)benzene-1,2-diol + S-adenosyl-L-methionine = a 2-methoxy-6-(all-trans-polyprenyl)phenol + S-adenosyl-L-homocysteine + H(+). It functions in the pathway cofactor biosynthesis; ubiquinone biosynthesis. O-methyltransferase that catalyzes the 2 O-methylation steps in the ubiquinone biosynthetic pathway. In Aliivibrio fischeri (strain ATCC 700601 / ES114) (Vibrio fischeri), this protein is Ubiquinone biosynthesis O-methyltransferase.